Reading from the N-terminus, the 484-residue chain is Trigger factor (484 aa).

The PPIase FKBP-type domain occupies 162–243 (GDFISIDLSA…VKSVKERELP (82 aa)). Residues 427–484 (DGNTIDTSEFFGKPPENDVTDLLDDDADGDAGVDADGDTENSAEPADADSADAAQGAG) are disordered. The segment covering 444-476 (DVTDLLDDDADGDAGVDADGDTENSAEPADADS) has biased composition (acidic residues).

This sequence belongs to the FKBP-type PPIase family. Tig subfamily.

It is found in the cytoplasm. The catalysed reaction is [protein]-peptidylproline (omega=180) = [protein]-peptidylproline (omega=0). Involved in protein export. Acts as a chaperone by maintaining the newly synthesized protein in an open conformation. Functions as a peptidyl-prolyl cis-trans isomerase. This Mycobacterium marinum (strain ATCC BAA-535 / M) protein is Trigger factor.